The sequence spans 205 residues: High frequency lysogenization protein HflD homolog (205 aa).

The protein belongs to the HflD family.

The protein localises to the cytoplasm. It localises to the cell inner membrane. The chain is High frequency lysogenization protein HflD homolog from Vibrio campbellii (strain ATCC BAA-1116).